Here is a 67-residue protein sequence, read N- to C-terminus: Large ribosomal subunit protein bL35 (67 aa).

This sequence belongs to the bacterial ribosomal protein bL35 family.

This Dehalococcoides mccartyi (strain ATCC BAA-2266 / KCTC 15142 / 195) (Dehalococcoides ethenogenes (strain 195)) protein is Large ribosomal subunit protein bL35.